The primary structure comprises 793 residues: Putative dipeptidyl aminopeptidase C2E11.08 (793 aa).

The Cytoplasmic segment spans residues 1–24 (MNDFSFEDKGLISRSGFGSRHVRR). A helical; Signal-anchor for type II membrane protein transmembrane segment spans residues 25 to 45 (VVKALALIFSLLILYLTISNV). Residues 46–793 (SDSPPKRDSL…STGVRQHRWD (748 aa)) lie on the Lumenal side of the membrane. 11 N-linked (GlcNAc...) asparagine glycosylation sites follow: asparagine 101, asparagine 136, asparagine 246, asparagine 299, asparagine 303, asparagine 324, asparagine 336, asparagine 377, asparagine 384, asparagine 407, and asparagine 535. Residues serine 647, aspartate 722, and histidine 755 each act as charge relay system in the active site. An N-linked (GlcNAc...) asparagine glycan is attached at asparagine 761.

This sequence belongs to the peptidase S9B family.

It localises to the vacuole membrane. The protein is Putative dipeptidyl aminopeptidase C2E11.08 of Schizosaccharomyces pombe (strain 972 / ATCC 24843) (Fission yeast).